The following is a 174-amino-acid chain: Large ribosomal subunit protein uL10 (174 aa).

The protein belongs to the universal ribosomal protein uL10 family. Part of the ribosomal stalk of the 50S ribosomal subunit. The N-terminus interacts with L11 and the large rRNA to form the base of the stalk. The C-terminus forms an elongated spine to which L12 dimers bind in a sequential fashion forming a multimeric L10(L12)X complex.

Its function is as follows. Forms part of the ribosomal stalk, playing a central role in the interaction of the ribosome with GTP-bound translation factors. This chain is Large ribosomal subunit protein uL10, found in Bordetella petrii (strain ATCC BAA-461 / DSM 12804 / CCUG 43448).